The sequence spans 537 residues: Glutamyl-tRNA reductase, chloroplastic (537 aa).

A chloroplast-targeting transit peptide spans 1-48 (MMASTTSATAAGGAFAAAKTRAGSSAAGGGACARVAAGGRRRSGVVVR). Substrate contacts are provided by residues 134-137 (TCNR), S194, 199-201 (EGQ), and Q205. Catalysis depends on C135, which acts as the Nucleophile. Residue 276-281 (GAGKMG) coordinates NADP(+).

Belongs to the glutamyl-tRNA reductase family.

The protein localises to the plastid. Its subcellular location is the chloroplast. The catalysed reaction is (S)-4-amino-5-oxopentanoate + tRNA(Glu) + NADP(+) = L-glutamyl-tRNA(Glu) + NADPH + H(+). It participates in porphyrin-containing compound metabolism; protoporphyrin-IX biosynthesis; 5-aminolevulinate from L-glutamyl-tRNA(Glu): step 1/2. Functionally, catalyzes the NADPH-dependent reduction of glutamyl-tRNA(Glu) to glutamate 1-semialdehyde (GSA). This Oryza sativa subsp. japonica (Rice) protein is Glutamyl-tRNA reductase, chloroplastic.